A 167-amino-acid chain; its full sequence is Thioredoxin Y2, chloroplastic (167 aa).

Residues 1-58 (MAISLATAYISPCFTPESSNSASPSRTLSSVRLPSQIRRFGSVQSPSSSTRFAPLTVR) constitute a chloroplast transit peptide. The region spanning 59 to 164 (AAKKQTFNSF…LVERIENSLQ (106 aa)) is the Thioredoxin domain. Catalysis depends on nucleophile residues Cys88 and Cys91. Cysteines 88 and 91 form a disulfide.

The protein belongs to the thioredoxin family. Plant Y-type subfamily. As to expression, expressed in leaves.

The protein resides in the plastid. It is found in the chloroplast stroma. Its function is as follows. Thiol-disulfide oxidoreductase that poorly activates chloroplastic malate dehydrogenase (NADP-MDH) and fructose-1,6-bisphosphatase. Provides reducing equivalents for peroxiredoxin Q. This is Thioredoxin Y2, chloroplastic from Arabidopsis thaliana (Mouse-ear cress).